The sequence spans 631 residues: Pescadillo homolog (631 aa).

The 94-residue stretch at 321 to 414 folds into the BRCT domain; the sequence is RLRTLFKGLK…QLLPTNDYFL (94 aa). Positions 428–442 are enriched in basic and acidic residues; that stretch reads SKRDSYIPPEEKALH. 2 disordered regions span residues 428 to 471 and 489 to 560; these read SKRD…EADQ and YKKY…EVDE. Phosphoserine is present on residues Ser453 and Ser457. 2 stretches are compositionally biased toward acidic residues: residues 453 to 471 and 498 to 525; these read SEEE…EADQ and VNED…EDVD. Residues 526-538 are compositionally biased toward basic and acidic residues; the sequence is EQTKRKQQEKEKM. The segment covering 544 to 553 has biased composition (basic residues); the sequence is KVHKVNKRQV. A coiled-coil region spans residues 593–629; the sequence is LRKKRRNIDADTKEAKKAAKREARKLAAEAAARAAKL.

The protein belongs to the pescadillo family.

The protein resides in the nucleus. It localises to the nucleolus. It is found in the nucleoplasm. In terms of biological role, required for maturation of ribosomal RNAs and formation of the large ribosomal subunit. The polypeptide is Pescadillo homolog (Drosophila persimilis (Fruit fly)).